We begin with the raw amino-acid sequence, 339 residues long: DNA-directed RNA polymerase subunit alpha (339 aa).

Residues 1–233 (MVREEVAGST…DLFLPFLHAE (233 aa)) form an alpha N-terminal domain (alpha-NTD) region. Residues 264–339 (KKGIPLNCIF…IDLLKNKLSF (76 aa)) form an alpha C-terminal domain (alpha-CTD) region.

Belongs to the RNA polymerase alpha chain family. In plastids the minimal PEP RNA polymerase catalytic core is composed of four subunits: alpha, beta, beta', and beta''. When a (nuclear-encoded) sigma factor is associated with the core the holoenzyme is formed, which can initiate transcription.

The protein localises to the plastid. Its subcellular location is the chloroplast. The catalysed reaction is RNA(n) + a ribonucleoside 5'-triphosphate = RNA(n+1) + diphosphate. Functionally, DNA-dependent RNA polymerase catalyzes the transcription of DNA into RNA using the four ribonucleoside triphosphates as substrates. This Festucopsis serpentini protein is DNA-directed RNA polymerase subunit alpha.